The chain runs to 581 residues: CUE domain-containing protein 3 (581 aa).

Positions I271 to L314 constitute a CUE domain. Y386 bears the Phosphotyrosine mark. Disordered regions lie at residues D422–K448 and G522–K581. Over residues G522 to T542 the composition is skewed to polar residues. Over residues Q552–K581 the composition is skewed to basic residues.

As to quaternary structure, component of the RQT (ribosome quality control trigger) complex.

Its subcellular location is the cytoplasm. The protein resides in the nucleus. Its function is as follows. Involved in activation of the ribosome quality control (RQC) pathway, a pathway that degrades nascent peptide chains during problematic translation. Specifically recognizes and binds RPS20/uS10 ubiquitinated by HEL2, promoting recruitment of the RQT (ribosome quality control trigger) complex on stalled ribosomes, followed by disassembly of stalled ribosomes. This chain is CUE domain-containing protein 3, found in Schizosaccharomyces pombe (strain 972 / ATCC 24843) (Fission yeast).